The sequence spans 333 residues: uncharacterized protein (333 aa).

The disordered stretch occupies residues Pro-234 to Asp-333. Pro residues predominate over residues Val-251–Glu-265. The segment covering Gly-324 to Asp-333 has biased composition (polar residues).

It localises to the cell projection. Its subcellular location is the cilium. The protein resides in the flagellum. This is an uncharacterized protein from Homo sapiens (Human).